The primary structure comprises 365 residues: Aminomethyltransferase (365 aa).

Belongs to the GcvT family. In terms of assembly, the glycine cleavage system is composed of four proteins: P, T, L and H.

The catalysed reaction is N(6)-[(R)-S(8)-aminomethyldihydrolipoyl]-L-lysyl-[protein] + (6S)-5,6,7,8-tetrahydrofolate = N(6)-[(R)-dihydrolipoyl]-L-lysyl-[protein] + (6R)-5,10-methylene-5,6,7,8-tetrahydrofolate + NH4(+). Its function is as follows. The glycine cleavage system catalyzes the degradation of glycine. The protein is Aminomethyltransferase of Desulfitobacterium hafniense (strain Y51).